An 89-amino-acid polypeptide reads, in one-letter code: UPF0223 protein Bcer98_2663 (89 aa).

It belongs to the UPF0223 family.

In Bacillus cytotoxicus (strain DSM 22905 / CIP 110041 / 391-98 / NVH 391-98), this protein is UPF0223 protein Bcer98_2663.